Reading from the N-terminus, the 330-residue chain is MATMKDVARLAGVSTSTVSHVINKDRFVSEAITAKVEAAIKELNYAPSALARSLKLNQTHTIGMLITASTNPFYSELVRGVERSCFERGYSLVLCNTEGDEQRMNRNLETLMQKRVDGLLLLCTETHQPSREIMQRYPTVPTVMMDWAPFDGDSDLIQDNSLLGGDLATQYLIDKGHTRIACITGPLDKTPARLRLEGYRAAMKRAGLNIPDGYEVTGDFEFNGGFDAMRQLLSHPLRPQAVFTGNDAMAVGVYQALYQAELQVPQDIAVIGYDDIELASFMTPPLTTIHQPKDELGELAIDVLIHRITQPTLQQQRLQLTPILMERGSA.

The HTH lacI-type domain maps to 2–56; the sequence is ATMKDVARLAGVSTSTVSHVINKDRFVSEAITAKVEAAIKELNYAPSALARSLKL. Residues 4-23 constitute a DNA-binding region (H-T-H motif); sequence MKDVARLAGVSTSTVSHVIN.

In terms of biological role, transcriptional repressor for the ribose rbsDACBK operon. RbsR binds to a region of perfect dyad symmetry spanning the rbs operon transcriptional start site. The affinity for the rbs operator is reduced by addition of ribose, consistent with ribose being the inducer of the operon. The polypeptide is Ribose operon repressor (rbsR) (Escherichia coli O6:H1 (strain CFT073 / ATCC 700928 / UPEC)).